Consider the following 551-residue polypeptide: Vacuolar protein sorting-associated protein 17 (551 aa).

The segment at 1–100 (MTSAVPYDPY…SERVILPERS (100 aa)) is disordered. Polar residues-rich tracts occupy residues 29-39 (AATTTDGSSSM) and 46-64 (TEQTAASVQDNGTANNIQN). A PX domain is found at 108–227 (LLAKVTGLER…FFIESDFNTY (120 aa)). Positions 359 to 385 (IMRNLVQAQQNSKAKQEQARRFRSRRD) form a coiled coil. The interval 474–504 (RLGRHAVSNNNSDTSQTLKGDSWTGESNRKS) is disordered. Residues 480–504 (VSNNNSDTSQTLKGDSWTGESNRKS) show a composition bias toward polar residues. Ser544 is modified (phosphoserine).

Belongs to the VPS17 family. Component of the retromer complex which consists of VPS29, VPS26, VPS35, VPS5 and VPS17. Component of a retromer subcomplex consisting of VPS5 and VPS17. Post-translationally, phosphorylated on one or more serine residues.

It is found in the endomembrane system. Its function is as follows. Component of the membrane-associated retromer complex which is essential in endosome-to-Golgi retrograde transport. The VPS5-VPS17 subcomplex may assemble onto the membrane to promote vesicle formation and is required for recycling the vacuolar protein-sorting receptor. Required for the sorting and delivery of a subset of soluble vacuolar hydrolases. Required for retention of late Golgi membrane proteins and vacuolar biogenesis. Involved in vacuolar fragmentation during hyperosmotic stress. In Saccharomyces cerevisiae (strain ATCC 204508 / S288c) (Baker's yeast), this protein is Vacuolar protein sorting-associated protein 17.